A 396-amino-acid chain; its full sequence is S-arrestin (396 aa).

The protein belongs to the arrestin family.

Arrestin is one of the major proteins of the ros (retinal rod outer segments); it binds to photoactivated-phosphorylated rhodopsin, thereby apparently preventing the transducin-mediated activation of phosphodiesterase. This chain is S-arrestin, found in Lithobates pipiens (Northern leopard frog).